The following is a 127-amino-acid chain: Protein ApaG (127 aa).

The region spanning 3–127 is the ApaG domain; the sequence is NDQKYDIKVQ…FILSVPRVLH (125 aa).

The chain is Protein ApaG from Nitrosomonas eutropha (strain DSM 101675 / C91 / Nm57).